A 418-amino-acid chain; its full sequence is Serine hydroxymethyltransferase (418 aa).

(6S)-5,6,7,8-tetrahydrofolate-binding positions include Leu-121 and 125–127; that span reads GHL. Position 230 is an N6-(pyridoxal phosphate)lysine (Lys-230). 356 to 358 is a binding site for (6S)-5,6,7,8-tetrahydrofolate; sequence SPF.

The protein belongs to the SHMT family. As to quaternary structure, homodimer. Pyridoxal 5'-phosphate is required as a cofactor.

It is found in the cytoplasm. The catalysed reaction is (6R)-5,10-methylene-5,6,7,8-tetrahydrofolate + glycine + H2O = (6S)-5,6,7,8-tetrahydrofolate + L-serine. The protein operates within one-carbon metabolism; tetrahydrofolate interconversion. Its pathway is amino-acid biosynthesis; glycine biosynthesis; glycine from L-serine: step 1/1. Functionally, catalyzes the reversible interconversion of serine and glycine with tetrahydrofolate (THF) serving as the one-carbon carrier. This reaction serves as the major source of one-carbon groups required for the biosynthesis of purines, thymidylate, methionine, and other important biomolecules. Also exhibits THF-independent aldolase activity toward beta-hydroxyamino acids, producing glycine and aldehydes, via a retro-aldol mechanism. The sequence is that of Serine hydroxymethyltransferase from Pseudoalteromonas atlantica (strain T6c / ATCC BAA-1087).